Reading from the N-terminus, the 417-residue chain is Serine hydroxymethyltransferase 1 (417 aa).

(6S)-5,6,7,8-tetrahydrofolate is bound by residues Leu-121 and 125–127 (GHL). Lys-229 is subject to N6-(pyridoxal phosphate)lysine. 354–356 (SPF) contributes to the (6S)-5,6,7,8-tetrahydrofolate binding site.

It belongs to the SHMT family. In terms of assembly, homodimer. Requires pyridoxal 5'-phosphate as cofactor.

Its subcellular location is the cytoplasm. It catalyses the reaction (6R)-5,10-methylene-5,6,7,8-tetrahydrofolate + glycine + H2O = (6S)-5,6,7,8-tetrahydrofolate + L-serine. The protein operates within one-carbon metabolism; tetrahydrofolate interconversion. It functions in the pathway amino-acid biosynthesis; glycine biosynthesis; glycine from L-serine: step 1/1. Catalyzes the reversible interconversion of serine and glycine with tetrahydrofolate (THF) serving as the one-carbon carrier. This reaction serves as the major source of one-carbon groups required for the biosynthesis of purines, thymidylate, methionine, and other important biomolecules. Also exhibits THF-independent aldolase activity toward beta-hydroxyamino acids, producing glycine and aldehydes, via a retro-aldol mechanism. This chain is Serine hydroxymethyltransferase 1, found in Pseudomonas savastanoi pv. phaseolicola (strain 1448A / Race 6) (Pseudomonas syringae pv. phaseolicola (strain 1448A / Race 6)).